We begin with the raw amino-acid sequence, 941 residues long: Zinc finger protein 507 (941 aa).

S95 carries the phosphoserine modification. 2 C2H2-type zinc fingers span residues 122–144 and 152–175; these read YQCS…VKQH and LMCS…VSEH. The segment covering 165 to 177 has biased composition (basic and acidic residues); sequence QELEAHVVSEHEN. Residues 165-198 are disordered; the sequence is QELEAHVVSEHENSASSQARSSPSGQGATERKSE. The span at 178-192 shows a compositional bias: low complexity; that stretch reads SASSQARSSPSGQGA. The segment at 237-259 adopts a C2H2-type 3 zinc-finger fold; it reads YRCLFCSYTCGQQRMLKTHAWKH. A Phosphoserine modification is found at S415. A disordered region spans residues 455 to 477; the sequence is ELSKGLAPDENAPPGRRRTNSES. 5 consecutive C2H2-type zinc fingers follow at residues 630–652, 658–680, 686–709, 746–768, and 774–796; these read YRCR…LRVH, YQCP…MINH, HQCK…REQH, YRCD…RRVH, and YRCS…MWKH. Residues 823 to 856 form a disordered region; sequence GKSRGKPLLTSSEERTGPTTGSPENLVSSSELTS. A compositionally biased stretch (polar residues) spans 839-856; sequence GPTTGSPENLVSSSELTS. The C2H2-type 9 zinc finger occupies 899 to 921; that stretch reads FCCCICGFESTSKESLLDHMKEH.

It belongs to the krueppel C2H2-type zinc-finger protein family.

It is found in the nucleus. Functionally, may be involved in transcriptional regulation. This chain is Zinc finger protein 507 (Znf507), found in Mus musculus (Mouse).